A 215-amino-acid polypeptide reads, in one-letter code: Adenylate kinase (215 aa).

10 to 15 contacts ATP; that stretch reads GAGKGT. Positions 30-59 are NMP; the sequence is STGDIFRKNISENTPLGMEARSYMDKGLLV. Residues Thr-31, Arg-36, 57 to 59, 85 to 88, and Gln-92 each bind AMP; these read LLV and GFPR. Residues 126–163 form an LID region; sequence GRRVCTSCGGSFHIKFNPPTIDGKCNLCGSDIVQRKDD. ATP is bound at residue Arg-127. Zn(2+) is bound by residues Cys-130 and Cys-133. 136 to 137 is an ATP binding site; it reads SF. The Zn(2+) site is built by Cys-150 and Cys-153. The AMP site is built by Arg-160 and Arg-171. Position 199 (Lys-199) interacts with ATP.

Belongs to the adenylate kinase family. Monomer.

It is found in the cytoplasm. The catalysed reaction is AMP + ATP = 2 ADP. It participates in purine metabolism; AMP biosynthesis via salvage pathway; AMP from ADP: step 1/1. In terms of biological role, catalyzes the reversible transfer of the terminal phosphate group between ATP and AMP. Plays an important role in cellular energy homeostasis and in adenine nucleotide metabolism. This is Adenylate kinase from Clostridium botulinum (strain Alaska E43 / Type E3).